Reading from the N-terminus, the 206-residue chain is Charged multivesicular body protein 2a homolog 1 (206 aa).

The disordered stretch occupies residues 1–32 (MSFFGGNKKTPEQELKDSKRELSKGQREMDRE). The segment covering 9-32 (KTPEQELKDSKRELSKGQREMDRE) has biased composition (basic and acidic residues). Coiled-coil stretches lie at residues 12-80 (EQEL…RATK) and 114-148 (NKQTDLVQLQKTMMEYEKQTQRVEMTEEMMQDMFE).

The protein belongs to the SNF7 family. Probable core component of the endosomal sorting required for transport complex III (ESCRT-III). ESCRT-III components are thought to multimerize to form a flat lattice on the perimeter membrane of the endosome.

It localises to the endosome membrane. Probable core component of the endosomal sorting required for transport complex III (ESCRT-III) which is involved in multivesicular bodies (MVBs) formation and sorting of endosomal cargo proteins into MVBs. MVBs contain intraluminal vesicles (ILVs) that are generated by invagination and scission from the limiting membrane of the endosome and are delivered to lysosomes enabling degradation of membrane proteins. In Dictyostelium discoideum (Social amoeba), this protein is Charged multivesicular body protein 2a homolog 1 (chmp2a1).